Here is a 353-residue protein sequence, read N- to C-terminus: MRFTIIIPTCNNEATIRQLLISIESKEHYRILCIDGGSTDQTIPMIERLQRELKHISLIQLQNASIATCINKGLMDIKMTDPHDSDAFMVIKPTSIVLPGKLDRLTAAFKNNDNIDMVIGQRAYNYHGEWKLKSADEFIKDNRIVTLTEQPDLLSMMSFDGKLFSAKFAELQCDETLANTYNHAILVKAMQKATDIHLVSQMIVGDNDIDTHATSNDEDFNRYITEIMKIRQRVMEMLLLPEQRLLYSDMVDRILFNNSLKYYMNEHPAVTHTTIQLVKDYIMSMQHSDYVSQNMFDIINTVEFIGENWDREIYELWRQTLIQVGINRPTYKKFLIQLKGRKFAHRTKSMLKR.

Belongs to the glycosyltransferase 2 family.

This Staphylococcus aureus (strain COL) protein is Putative glycosyltransferase TagX (tagX).